We begin with the raw amino-acid sequence, 340 residues long: Functional amyloid subunit FapC (340 aa).

The signal sequence occupies residues M1 to A24. The stretch at N67 to L100 is one FapC_R1 repeat. The tract at residues A101–P133 is linker 1. Residues N134–A167 form a FapC_R2 repeat. Residues A168–T290 are linker 2. The stretch at N291–I324 is one FapC_R3 repeat. The Cys-X-X-Cys motif lies at C328–C331.

It belongs to the FapB/FapC family. In terms of assembly, the major component of purified amyloid fibrils. Fibrils are resistant to boiling in 2% (weight/vol) SDS and require &gt;90% (vol/vol) formic acid to dissolve. Interacts with FapA in vitro.

It is found in the fimbrium. It localises to the secreted. Its function is as follows. The major functional amyloid subunit in this bacterium. Upon overexpression of the endogenous six-gene locus (fapA-fapF), cells form large clumps during liquid growth, make large amounts of biofilm and produce amyloid fibrils. The sequence is that of Functional amyloid subunit FapC from Pseudomonas aeruginosa (strain ATCC 15692 / DSM 22644 / CIP 104116 / JCM 14847 / LMG 12228 / 1C / PRS 101 / PAO1).